The following is a 1052-amino-acid chain: CCAAT/enhancer-binding protein zeta (1052 aa).

3 disordered regions span residues 1 to 40, 122 to 158, and 621 to 677; these read MSADQEPVAFLAKQPWRPKQVTEDPDEEDEEDGDEGKNGF, VENKKQKATEGKKTSEKKVKNKTVAEQRPESCPVSKA, and SQLD…AEKP. Residues 23–34 show a composition bias toward acidic residues; it reads EDPDEEDEEDGD. Residues 122-150 show a composition bias toward basic and acidic residues; that stretch reads VENKKQKATEGKKTSEKKVKNKTVAEQRP. A compositionally biased stretch (acidic residues) spans 627 to 643; sequence PESDEENFVDVGDDSDD. Phosphoserine occurs at positions 629 and 641. Residues 644–677 are compositionally biased toward basic and acidic residues; it reads EKFTDADKGTATDAVKEVESKETEPESSAEAEKP. The residue at position 837 (Ser837) is a Phosphoserine. The segment at 876-969 is disordered; it reads KGAKADLEDS…QGQKKKKKSF (94 aa). A compositionally biased stretch (acidic residues) spans 883-932; that stretch reads EDSESSDGELGDLDDDEVSLGSMNDEDFEIDEDGGTFMDVSDDESEDAPE. Residues Ser958, Ser972, and Ser977 each carry the phosphoserine modification. Positions 1032 to 1052 are disordered; it reads KKKKNFRKKMKAPQKPKRQRK.

This sequence belongs to the CBF/MAK21 family. As to expression, ubiquitous.

The protein resides in the nucleus. In terms of biological role, stimulates transcription from the HSP70 promoter. In Mus musculus (Mouse), this protein is CCAAT/enhancer-binding protein zeta (Cebpz).